A 98-amino-acid polypeptide reads, in one-letter code: Integration host factor subunit beta (98 aa).

Belongs to the bacterial histone-like protein family. In terms of assembly, heterodimer of an alpha and a beta chain.

Functionally, this protein is one of the two subunits of integration host factor, a specific DNA-binding protein that functions in genetic recombination as well as in transcriptional and translational control. This Gluconacetobacter diazotrophicus (strain ATCC 49037 / DSM 5601 / CCUG 37298 / CIP 103539 / LMG 7603 / PAl5) protein is Integration host factor subunit beta.